Here is a 220-residue protein sequence, read N- to C-terminus: Probable septum site-determining protein MinC (220 aa).

Belongs to the MinC family. In terms of assembly, interacts with MinD and FtsZ.

Functionally, cell division inhibitor that blocks the formation of polar Z ring septums. Rapidly oscillates between the poles of the cell to destabilize FtsZ filaments that have formed before they mature into polar Z rings. Prevents FtsZ polymerization. This Prochlorococcus marinus subsp. pastoris (strain CCMP1986 / NIES-2087 / MED4) protein is Probable septum site-determining protein MinC.